A 775-amino-acid chain; its full sequence is Hepatocyte growth factor-regulated tyrosine kinase substrate (775 aa).

Residues 15–143 enclose the VHS domain; the sequence is ATSQLLLETD…IMKVEGHVFP (129 aa). Residues 160 to 220 form an FYVE-type zinc finger; that stretch reads WVDAEECHRC…VCEPCYEQLN (61 aa). Residues Cys166, Cys169, Cys182, Cys185, Cys190, and Cys193 each coordinate Zn(2+). An N6-acetyllysine modification is found at Lys207. Cys212 and Cys215 together coordinate Zn(2+). Position 216 is a phosphotyrosine (Tyr216). Residues 223–319 are disordered; sequence AEGKASSTTE…SPVNSSAPLA (97 aa). The tract at residues 225 to 541 is interaction with SNX1; the sequence is GKASSTTELP…QRLQEQEKER (317 aa). A UIM domain is found at 258 to 277; that stretch reads QEEEELQLALALSQSEAEEK. Polar residues predominate over residues 307–316; it reads LYSSPVNSSA. A phosphotyrosine mark is found at Tyr308, Tyr329, and Tyr334. A disordered region spans residues 338 to 405; sequence KQEEARKSPT…NGESEESHEQ (68 aa). Residues 443–541 form an interaction with SNAP25 and TRAK2 region; the sequence is SINTMHPQLL…QRLQEQEKER (99 aa). The interval 452–570 is interaction with STAM; it reads LELLNQLDER…FPLPYAQLQA (119 aa). The interaction with NF2 stretch occupies residues 478 to 775; sequence ARGALSALRE…GSEAQLISFD (298 aa). Residue Lys549 is modified to N6-succinyllysine. Residues 640–657 are compositionally biased toward low complexity; that stretch reads PGAQAAPQAQAGPTTSPA. 2 disordered regions span residues 640 to 690 and 719 to 775; these read PGAQ…PQTS and QDAS…ISFD. The span at 658–690 shows a compositional bias: polar residues; it reads YSSYQPTPTPGYQSVASQAPQSLPAISQPPQTS. Positions 744-761 are enriched in pro residues; sequence TGPPQQQPPVAQPAPTQG.

In terms of assembly, component of the ESCRT-0 complex composed of STAM or STAM2 and HGS. Part of a complex at least composed of HSG, STAM2 (or probably STAM) and EPS15. Interacts with STAM. Interacts with STAM2. Interacts with EPS15; the interaction is direct, calcium-dependent and inhibited by SNAP25. Identified in a complex with STAM and LITAF. Found in a complex with STAM and E3 ligase ITCH and DTX3L. Interacts with E3 ligase DTX3L; the interaction brings together STAM and HSG, promotes their recruitment to early endosomes and decreases STAM and HGS ubiquitination by ITCH. Interacts with NF2; the interaction is direct. Interacts with ubiquitin; the interaction is direct. Interacts with VPS37C. Interacts with SMAD1, SMAD2 and SMAD3. Interacts with TSG101; the interaction mediates the association with the ESCRT-I complex. Interacts with SNAP25; the interaction is direct and decreases with addition of increasing concentrations of free calcium. Interacts with SNX1; the interaction is direct. Component of a 550 kDa membrane complex at least composed of HGS and SNX1 but excluding EGFR. Interacts with TRAK1. Interacts with TRAK2. Component of the CART complex, at least composed of ACTN4, HGS/HRS, MYO5B and TRIM3. Interacts with ARRDC3. Identified in a complex containing at least ARRDC4, AVPR2 and HGS. Interacts (via UIM domain) with UBQLN1 (via ubiquitin-like domain). Interacts with LAPTM4B; promotes HGS ubiquitination. Post-translationally, phosphorylated on Tyr-334. This phosphorylation occurs in response to EGF. A minor site of phosphorylation on Tyr-329 is detected. Protein phosphorylation may also be triggered in response to IL-2, GM-CSF and HGF. Ubiquitinated by ITCH. Ubiquitous expression in adult and fetal tissues with higher expression in testis.

Its subcellular location is the cytoplasm. The protein localises to the early endosome membrane. The protein resides in the endosome. It is found in the multivesicular body membrane. In terms of biological role, involved in intracellular signal transduction mediated by cytokines and growth factors. When associated with STAM, it suppresses DNA signaling upon stimulation by IL-2 and GM-CSF. Could be a direct effector of PI3-kinase in vesicular pathway via early endosomes and may regulate trafficking to early and late endosomes by recruiting clathrin. May concentrate ubiquitinated receptors within clathrin-coated regions. Involved in down-regulation of receptor tyrosine kinase via multivesicular body (MVBs) when complexed with STAM (ESCRT-0 complex). The ESCRT-0 complex binds ubiquitin and acts as a sorting machinery that recognizes ubiquitinated receptors and transfers them to further sequential lysosomal sorting/trafficking processes. May contribute to the efficient recruitment of SMADs to the activin receptor complex. Involved in receptor recycling via its association with the CART complex, a multiprotein complex required for efficient transferrin receptor recycling but not for EGFR degradation. This chain is Hepatocyte growth factor-regulated tyrosine kinase substrate (Hgs), found in Mus musculus (Mouse).